A 338-amino-acid chain; its full sequence is Ribosomal RNA small subunit methyltransferase C (338 aa).

Belongs to the methyltransferase superfamily. RsmC family. Monomer.

It is found in the cytoplasm. It carries out the reaction guanosine(1207) in 16S rRNA + S-adenosyl-L-methionine = N(2)-methylguanosine(1207) in 16S rRNA + S-adenosyl-L-homocysteine + H(+). In terms of biological role, specifically methylates the guanine in position 1207 of 16S rRNA in the 30S particle. The polypeptide is Ribosomal RNA small subunit methyltransferase C (Acinetobacter baylyi (strain ATCC 33305 / BD413 / ADP1)).